Here is a 287-residue protein sequence, read N- to C-terminus: Bifunctional protein FolD (287 aa).

NADP(+) is bound by residues 171–173, isoleucine 196, and isoleucine 237; that span reads GHS.

This sequence belongs to the tetrahydrofolate dehydrogenase/cyclohydrolase family. Homodimer.

The enzyme catalyses (6R)-5,10-methylene-5,6,7,8-tetrahydrofolate + NADP(+) = (6R)-5,10-methenyltetrahydrofolate + NADPH. It carries out the reaction (6R)-5,10-methenyltetrahydrofolate + H2O = (6R)-10-formyltetrahydrofolate + H(+). It functions in the pathway one-carbon metabolism; tetrahydrofolate interconversion. Functionally, catalyzes the oxidation of 5,10-methylenetetrahydrofolate to 5,10-methenyltetrahydrofolate and then the hydrolysis of 5,10-methenyltetrahydrofolate to 10-formyltetrahydrofolate. In Methanosarcina mazei (strain ATCC BAA-159 / DSM 3647 / Goe1 / Go1 / JCM 11833 / OCM 88) (Methanosarcina frisia), this protein is Bifunctional protein FolD.